The following is a 165-amino-acid chain: Pyruvoyl-dependent arginine decarboxylase (165 aa).

Ser53 bears the Pyruvic acid (Ser) mark.

It belongs to the PdaD family. As to quaternary structure, trimer of an alpha-beta dimer. Requires pyruvate as cofactor.

It catalyses the reaction L-arginine + H(+) = agmatine + CO2. This Methanocaldococcus jannaschii (strain ATCC 43067 / DSM 2661 / JAL-1 / JCM 10045 / NBRC 100440) (Methanococcus jannaschii) protein is Pyruvoyl-dependent arginine decarboxylase (pdaD).